A 245-amino-acid polypeptide reads, in one-letter code: 1-(5-phosphoribosyl)-5-[(5-phosphoribosylamino)methylideneamino] imidazole-4-carboxamide isomerase (245 aa).

The Proton acceptor role is filled by Asp7. Catalysis depends on Asp129, which acts as the Proton donor.

This sequence belongs to the HisA/HisF family.

It localises to the cytoplasm. It catalyses the reaction 1-(5-phospho-beta-D-ribosyl)-5-[(5-phospho-beta-D-ribosylamino)methylideneamino]imidazole-4-carboxamide = 5-[(5-phospho-1-deoxy-D-ribulos-1-ylimino)methylamino]-1-(5-phospho-beta-D-ribosyl)imidazole-4-carboxamide. It functions in the pathway amino-acid biosynthesis; L-histidine biosynthesis; L-histidine from 5-phospho-alpha-D-ribose 1-diphosphate: step 4/9. This chain is 1-(5-phosphoribosyl)-5-[(5-phosphoribosylamino)methylideneamino] imidazole-4-carboxamide isomerase, found in Shewanella baltica (strain OS223).